The primary structure comprises 248 residues: MVRHSKNILPKTTNPNPESNRYPPHPADPSHPSRYHLHLQAHHLRSPLLSASAENRRRDPQNLSTTKATSPSTHQSPILPDDIHSILPFAHMNITHTTGQHTENSIRAPSSTTILWHSCQLHSQPSSISSSTKIVSGRVLFSDSSPCSSNPHTQQPSIFSCPTLAGRKLESSGSIFLSTTLPSFIVSIVYLLSVSCRLVPGQTAFTNTNSSVLIDIPILLCSVGSLSLILKEPKYRSYLAIVSPTLSC.

Disordered regions lie at residues 1-34 (MVRHSKNILPKTTNPNPESNRYPPHPADPSHPSR) and 51-81 (ASAENRRRDPQNLSTTKATSPSTHQSPILPD). Composition is skewed to polar residues over residues 10–19 (PKTTNPNPES) and 61–76 (QNLSTTKATSPSTHQS).

It belongs to the UPF0328 family.

The polypeptide is UPF0328 protein ECU06_0030/ECU06_1690/ECU11_0020 (Encephalitozoon cuniculi (strain GB-M1) (Microsporidian parasite)).